A 174-amino-acid polypeptide reads, in one-letter code: UPF0340 protein SAHV_2098 (174 aa).

It belongs to the UPF0340 family.

This Staphylococcus aureus (strain Mu3 / ATCC 700698) protein is UPF0340 protein SAHV_2098.